The chain runs to 1342 residues: DNA-directed RNA polymerase subunit beta (1342 aa).

Belongs to the RNA polymerase beta chain family. The RNAP catalytic core consists of 2 alpha, 1 beta, 1 beta' and 1 omega subunit. When a sigma factor is associated with the core the holoenzyme is formed, which can initiate transcription.

The catalysed reaction is RNA(n) + a ribonucleoside 5'-triphosphate = RNA(n+1) + diphosphate. Its function is as follows. DNA-dependent RNA polymerase catalyzes the transcription of DNA into RNA using the four ribonucleoside triphosphates as substrates. In Buchnera aphidicola subsp. Acyrthosiphon pisum (strain 5A), this protein is DNA-directed RNA polymerase subunit beta.